A 150-amino-acid polypeptide reads, in one-letter code: Ribonuclease HI (150 aa).

An RNase H type-1 domain is found at 1-141; the sequence is MKLINAYTDG…VDVLARGQAM (141 aa). Mg(2+)-binding residues include Asp-9, Glu-47, Asp-69, and Asp-133.

Belongs to the RNase H family. Monomer. Mg(2+) serves as cofactor.

Its subcellular location is the cytoplasm. The catalysed reaction is Endonucleolytic cleavage to 5'-phosphomonoester.. Its function is as follows. Endonuclease that specifically degrades the RNA of RNA-DNA hybrids. The sequence is that of Ribonuclease HI from Xylella fastidiosa (strain Temecula1 / ATCC 700964).